The following is a 595-amino-acid chain: Aspartate--tRNA(Asp/Asn) ligase (595 aa).

Residue glutamate 175 participates in L-aspartate binding. Residues 199–202 are aspartate; that stretch reads QQFK. Residues arginine 221 and histidine 451 each contribute to the L-aspartate site. ATP is bound at residue 221 to 223; that stretch reads RDE. Glutamate 485 is an ATP binding site. Arginine 492 lines the L-aspartate pocket. 537–540 is an ATP binding site; sequence GVDR.

This sequence belongs to the class-II aminoacyl-tRNA synthetase family. Type 1 subfamily. Homodimer.

It localises to the cytoplasm. It carries out the reaction tRNA(Asx) + L-aspartate + ATP = L-aspartyl-tRNA(Asx) + AMP + diphosphate. Aspartyl-tRNA synthetase with relaxed tRNA specificity since it is able to aspartylate not only its cognate tRNA(Asp) but also tRNA(Asn). Reaction proceeds in two steps: L-aspartate is first activated by ATP to form Asp-AMP and then transferred to the acceptor end of tRNA(Asp/Asn). The polypeptide is Aspartate--tRNA(Asp/Asn) ligase (Acidiphilium cryptum (strain JF-5)).